We begin with the raw amino-acid sequence, 208 residues long: Capsid protein (208 aa).

Over residues 1-12 (MPPKRQNTETRK) the composition is skewed to basic and acidic residues. The interval 1-23 (MPPKRQNTETRKARQNRARRSRQ) is disordered. The segment covering 13–22 (ARQNRARRSR) has biased composition (basic residues).

It localises to the virion. Its function is as follows. Capsid protein self-assembles to form a quasi spherical capsid, about 25-35 nm. The chain is Capsid protein from Pelargonium zonate spot virus (isolate Tomato/Italy/1982) (PZSV).